The following is a 376-amino-acid chain: Immunoglobulin G-binding protein H (376 aa).

Residues Met-1–Ala-41 form the signal peptide. The disordered stretch occupies residues Thr-69–His-271. 4 stretches are compositionally biased toward basic and acidic residues: residues Glu-72–Gln-146, Glu-156–Ile-203, Leu-211–Ile-245, and Leu-253–His-271. 3 C repeats span residues Gln-153–His-187, Gln-195–His-229, and Gln-237–His-271. 4 D repeats span residues Gln-272 to Glu-277, Ala-278 to Glu-283, Ala-286 to Glu-291, and Ala-293 to Gly-298. The tract at residues Leu-292–Thr-348 is disordered. The short motif at Leu-342–Gly-346 is the LPXTG sorting signal element. At Thr-345 the chain carries Pentaglycyl murein peptidoglycan amidated threonine. The propeptide at Gly-346–Asn-376 is removed by sortase.

This sequence belongs to the M protein family.

The protein localises to the secreted. It localises to the cell wall. This Streptococcus pyogenes serotype M1 protein is Immunoglobulin G-binding protein H.